The primary structure comprises 336 residues: MATIKDVAKMAGVSTTTVSHVINKTRFVAKDTEEAVLSAIKQLNYSPSAVARSLKVNTTKSIGMIVTTSEAPYFAEIIHSVEEHCYRQGYSLFCVTHKMDPEKVKNHLEMLAKKRVDGLLVMCSEYTQDSLDLLSSFSTIPMVVMDWGPNANTDVIDDHSFDGGYLATKHLIECGHKKIGIICGELNKTTARTRYEGFEKAMEEAKLTINPSWVLEGAFEPEDGYECMNRLLTQEKLPTALFCCNDVMALGAISALTEKGLRVPEDMSIIGYDDIHASRFYAPPLTTIHQSKLRLGRQAINILLERITHKDEGVQQYSRIDITPELIIRKSVKSIL.

The HTH lacI-type domain maps to 2-56 (ATIKDVAKMAGVSTTTVSHVINKTRFVAKDTEEAVLSAIKQLNYSPSAVARSLKV). The segment at residues 4–23 (IKDVAKMAGVSTTTVSHVIN) is a DNA-binding region (H-T-H motif). A DNA-binding region spans residues 48–56 (SAVARSLKV). Hypoxanthine-binding residues include tyrosine 73, lysine 188, threonine 190, phenylalanine 219, and aspartate 273.

In terms of assembly, homodimer.

It functions in the pathway purine metabolism; purine nucleotide biosynthesis [regulation]. Functionally, is the main repressor of the genes involved in the de novo synthesis of purine nucleotides, regulating purB, purC, purEK, purF, purHD, purL, purMN and guaBA expression. PurR is allosterically activated to bind its cognate DNA by binding the purine corepressors, hypoxanthine or guanine, thereby effecting transcription repression. The chain is HTH-type transcriptional repressor PurR from Haemophilus influenzae (strain ATCC 51907 / DSM 11121 / KW20 / Rd).